The primary structure comprises 395 residues: MPGRSRVALVLLAAAVSCAVAQHAPPWTEDCRKSTYPPSGPTYRGPVPWYTINLDLPPYKRWHELMLDKAPMLKVIVNSLKNMINTFVPSGKIVQVVDEKLPGLLGNFPGPFEEEMKGIAAVTDIPLGEIISFNIFYELFTICTSIVAEDKKGHLIHGRNMDFGVFLGWNINNDTWVITEQLKPLTVNLDFQRNNKTVFKASSFAGYVGMLTGFKPGLFSLSLNERFSINGGYLGILEWILGKKDAMWIGFLTRTVLENSTSYEEAKNLLTKTKILAPAYFILGGNQSGEGCVITRDRKESLDVYELDAKQGRWYVVQTNYDRWKHPFFLDDRRTPAKMCLNRTSQENISFETMYDVLSTKPVLNKLTVYTTLIDVTKGQFETYLRDCPDPCIGW.

The signal sequence occupies residues Met-1–Ala-21. A disulfide bond links Cys-31 and Cys-340. The Nucleophile role is filled by Cys-143. N-linked (GlcNAc...) asparagine glycosylation is found at Asn-195, Asn-259, Asn-286, and Asn-342. Residues Cys-388 and Cys-392 are joined by a disulfide bond.

It belongs to the acid ceramidase family. In terms of assembly, heterodimer; disulfide-linked. The heterodimer is composed of the disulfide-linked alpha and beta chains produced by autocatalytic cleavage of the precursor. N-glycosylated. Post-translationally, proteolytically cleaved into two chains alpha and beta that remain associated via a disulfide bond. Cleavage gives rise to a conformation change that activates the enzyme. The same catalytic Cys residue mediates the autoproteolytic cleavage and subsequent hydrolysis of lipid substrates. The beta chain may undergo an additional C-terminal processing.

The protein localises to the lysosome. Its subcellular location is the secreted. The catalysed reaction is an N-acylsphing-4-enine + H2O = sphing-4-enine + a fatty acid. It carries out the reaction N-dodecanoylsphing-4-enine + H2O = dodecanoate + sphing-4-enine. The enzyme catalyses N-tetradecanoylsphing-4-enine + H2O = tetradecanoate + sphing-4-enine. It catalyses the reaction N-hexadecanoylsphing-4-enine + H2O = sphing-4-enine + hexadecanoate. The catalysed reaction is N-octadecanoylsphing-4-enine + H2O = sphing-4-enine + octadecanoate. It carries out the reaction N-dodecanoyl-(4R)-hydroxysphinganine + H2O = (4R)-hydroxysphinganine + dodecanoate. The enzyme catalyses N-(dodecanoyl)-sphinganine + H2O = dodecanoate + sphinganine. It catalyses the reaction N-(acetyl)-sphing-4-enine + H2O = sphing-4-enine + acetate. The catalysed reaction is N-(hexanoyl)sphing-4-enine + H2O = hexanoate + sphing-4-enine. It carries out the reaction N-octanoylsphing-4-enine + H2O = octanoate + sphing-4-enine. The enzyme catalyses N-(9Z-octadecenoyl)-sphing-4-enine + H2O = sphing-4-enine + (9Z)-octadecenoate. It catalyses the reaction N-dodecanoylethanolamine + H2O = dodecanoate + ethanolamine. Its pathway is lipid metabolism; sphingolipid metabolism. In terms of biological role, lysosomal ceramidase that hydrolyzes sphingolipid ceramides into sphingosine and free fatty acids at acidic pH. Ceramides, sphingosine, and its phosphorylated form sphingosine-1-phosphate are bioactive lipids that mediate cellular signaling pathways regulating several biological processes including cell proliferation, apoptosis and differentiation. Has a higher catalytic efficiency towards C12-ceramides versus other ceramides. Also catalyzes the reverse reaction allowing the synthesis of ceramides from fatty acids and sphingosine. For the reverse synthetic reaction, the natural sphingosine D-erythro isomer is more efficiently utilized as a substrate compared to D-erythro-dihydrosphingosine and D-erythro-phytosphingosine, while the fatty acids with chain lengths of 12 or 14 carbons are the most efficiently used. Also has an N-acylethanolamine hydrolase activity. By regulating the levels of ceramides, sphingosine and sphingosine-1-phosphate in the epidermis, mediates the calcium-induced differentiation of epidermal keratinocytes. Also indirectly regulates tumor necrosis factor/TNF-induced apoptosis. By regulating the intracellular balance between ceramides and sphingosine, in adrenocortical cells, probably also acts as a regulator of steroidogenesis. The protein is Acid ceramidase of Pan troglodytes (Chimpanzee).